A 415-amino-acid polypeptide reads, in one-letter code: Alpha-2Db adrenergic receptor (415 aa).

The Extracellular segment spans residues 1-33 (MDLSTITFLLPNSSEDTNGTSAPRLPPHSQCAS). 2 N-linked (GlcNAc...) asparagine glycosylation sites follow: asparagine 12 and asparagine 18. Residues 34-58 (VLIVLVVTVIILVTIVGNVLVVVAV) form a helical membrane-spanning segment. Over 59 to 70 (FTSRALRAPQNL) the chain is Cytoplasmic. A helical membrane pass occupies residues 71–96 (FLVSLAAADILVATLVIPFSLANEVM). Topologically, residues 97-106 (GYWYLGSTWC) are extracellular. A disulfide bridge links cysteine 106 with cysteine 179. The chain crosses the membrane as a helical span at residues 107–129 (AFYLALDVLFCTSSIVHLCAISL). The Cytoplasmic segment spans residues 130–150 (DRYWSVTKAVSYNLKRTPRRI). The chain crosses the membrane as a helical span at residues 151 to 173 (KIMITVVWVISAVISFPPLLMTK). At 174–184 (HDELECLLNNE) the chain is on the extracellular side. An N-linked (GlcNAc...) asparagine glycan is attached at asparagine 183. A helical membrane pass occupies residues 185–208 (TWYILSSCIVSFFAPGLIMILVYC). The Cytoplasmic segment spans residues 209 to 339 (RIYRVAKQRA…QMREKRFTFV (131 aa)). The disordered stretch occupies residues 234–299 (QSETCFVRKG…EGAQSCPKPN (66 aa)). Basic residues predominate over residues 276 to 286 (NRHRNSRFAKS). The chain crosses the membrane as a helical span at residues 340 to 363 (LAVVMGVFVLCWFPFFFTYSLHAI). The Extracellular segment spans residues 364-376 (CRKSCTIPDSLFN). The chain crosses the membrane as a helical span at residues 377–397 (LFFWIGYCNSSVNPIIYTIFN). Topologically, residues 398–415 (RDFRKAFKKIMCRHSTRT) are cytoplasmic.

It belongs to the G-protein coupled receptor 1 family. Adrenergic receptor subfamily. ADRA2D sub-subfamily.

Its subcellular location is the cell membrane. Alpha-2 adrenergic receptors mediate the catecholamine-induced inhibition of adenylate cyclase through the action of G proteins. The order of potency for this receptor is dexmedetomidine &gt; norepinephrine = epinephrine &gt; oxymetazoline. This is Alpha-2Db adrenergic receptor (adra2db) from Danio rerio (Zebrafish).